The primary structure comprises 456 residues: Multidrug resistance protein NorM (456 aa).

A run of 12 helical transmembrane segments spans residues 11-31 (LIKL…MGFV), 53-73 (IWLP…PVVA), 92-112 (VVLA…TQFI), 126-146 (TVGY…FQTL), 159-179 (AMVI…IFVY), 189-209 (GVGC…LLLA), 242-262 (FPVA…ALLV), 268-288 (IIVA…MLPM), 314-334 (SRVG…ITVL), 356-376 (LLLF…AAGA), 385-405 (AIFN…GYIL), and 417-437 (AQGF…MLGV).

The protein belongs to the multi antimicrobial extrusion (MATE) (TC 2.A.66.1) family.

It localises to the cell inner membrane. Functionally, multidrug efflux pump that functions as a Na(+)/drug antiporter. Confers resistance to several drugs, such as norfloxacin, ciprofloxacin, ethidium, kanamycin and streptomycin. This is Multidrug resistance protein NorM (norM) from Vibrio parahaemolyticus serotype O3:K6 (strain RIMD 2210633).